The primary structure comprises 292 residues: Acetyl-coenzyme A carboxylase carboxyl transferase subunit beta (292 aa).

The CoA carboxyltransferase N-terminal domain occupies 29-292 (LWSKCPECGQ…HGCLQGSAAV (264 aa)). Residues Cys-33, Cys-36, Cys-52, and Cys-55 each coordinate Zn(2+). The C4-type zinc-finger motif lies at 33 to 55 (CPECGQVVYRKDLLANASVCSNC).

The protein belongs to the AccD/PCCB family. In terms of assembly, acetyl-CoA carboxylase is a heterohexamer composed of biotin carboxyl carrier protein (AccB), biotin carboxylase (AccC) and two subunits each of ACCase subunit alpha (AccA) and ACCase subunit beta (AccD). Zn(2+) is required as a cofactor.

The protein localises to the cytoplasm. The catalysed reaction is N(6)-carboxybiotinyl-L-lysyl-[protein] + acetyl-CoA = N(6)-biotinyl-L-lysyl-[protein] + malonyl-CoA. It participates in lipid metabolism; malonyl-CoA biosynthesis; malonyl-CoA from acetyl-CoA: step 1/1. Its function is as follows. Component of the acetyl coenzyme A carboxylase (ACC) complex. Biotin carboxylase (BC) catalyzes the carboxylation of biotin on its carrier protein (BCCP) and then the CO(2) group is transferred by the transcarboxylase to acetyl-CoA to form malonyl-CoA. The sequence is that of Acetyl-coenzyme A carboxylase carboxyl transferase subunit beta from Synechococcus sp. (strain WH7803).